A 254-amino-acid polypeptide reads, in one-letter code: Thiazole synthase (254 aa).

K96 acts as the Schiff-base intermediate with DXP in catalysis. 1-deoxy-D-xylulose 5-phosphate-binding positions include G157, 183–184 (AG), and 205–206 (NT).

The protein belongs to the ThiG family. As to quaternary structure, homotetramer. Forms heterodimers with either ThiH or ThiS.

It localises to the cytoplasm. The enzyme catalyses [ThiS sulfur-carrier protein]-C-terminal-Gly-aminoethanethioate + 2-iminoacetate + 1-deoxy-D-xylulose 5-phosphate = [ThiS sulfur-carrier protein]-C-terminal Gly-Gly + 2-[(2R,5Z)-2-carboxy-4-methylthiazol-5(2H)-ylidene]ethyl phosphate + 2 H2O + H(+). The protein operates within cofactor biosynthesis; thiamine diphosphate biosynthesis. Functionally, catalyzes the rearrangement of 1-deoxy-D-xylulose 5-phosphate (DXP) to produce the thiazole phosphate moiety of thiamine. Sulfur is provided by the thiocarboxylate moiety of the carrier protein ThiS. In vitro, sulfur can be provided by H(2)S. The sequence is that of Thiazole synthase from Clostridium perfringens (strain 13 / Type A).